A 365-amino-acid polypeptide reads, in one-letter code: AP2/ERF and B3 domain-containing protein Os01g0141000 (365 aa).

The disordered stretch occupies residues 1-24 (MGVVSFSSTSSGASTATTESGGAV). Residues 68–123 (RYKGVVPQPNGRWGAQIYERHARVWLGTFPDEEAAARAYDVAALRYRGRDAATNFP) constitute a DNA-binding region (AP2/ERF). A DNA-binding region (TF-B3) is located at residues 182 to 294 (FEKAVTPSDV…KLLFIDCKKN (113 aa)).

It is found in the nucleus. The polypeptide is AP2/ERF and B3 domain-containing protein Os01g0141000 (Oryza sativa subsp. japonica (Rice)).